The sequence spans 317 residues: Putative AP2/ERF and B3 domain-containing protein Os01g0140700 (317 aa).

Residues 1 to 37 (MEQEAAMVVFSCNSGSGGSSSTTDSKQEEEEEEELAA) are disordered. The span at 27–37 (QEEEEEEELAA) shows a compositional bias: acidic residues. Positions 66–121 (RYKGVVPQPNGRWGAQIYERHARVWLGTFPDEEAAARAYDVAALRFRGRDAVTNRA) form a DNA-binding region, AP2/ERF. Positions 178–287 (FEKAVTPSDV…EKHLLIDCKK (110 aa)) form a DNA-binding region, TF-B3.

It localises to the nucleus. In Oryza sativa subsp. japonica (Rice), this protein is Putative AP2/ERF and B3 domain-containing protein Os01g0140700.